A 544-amino-acid polypeptide reads, in one-letter code: MGPGARLAALLVLLKLGVGDPAAAAGREDTFSALTSVARALAPERRLLGTLRRYLRGEEARLRDLTRFYDKVLSLHEDLKIPVVNPLLVFTLIKRLPSDWRNVVHSLEATENIRAPKDGYEKVEQDLPAFEDLEGAARALMRLQDAYMLNVKGLAQGVFQRVTGSSITDLYSPRQLFSLTADDCFQVGKVAYDTGDYYHAIPWLEEAVSLFRRSYGEWKTEDEASLEDALDYLAFACYQVGNVSCALSLSREFLVYSPDNKRMARNVLKYERLLAENGHLMAAETAIQRPNVPHLQTRDTYEGLCQTLGSQPTHYQIPSLYCSYETNSSPYLLLQPARKEVIHLRPLVALYHDFVSDEEAQKIRELAEPWLQRSVVASGEKQLQVEYRISKSAWLKDTVDPVLVTLDRRIAALTGLDIQPPYAEYLQVVNYGIGGHYEPHFDHATSPSSPLYKMKSGNRAATLMIYLSSVEAGGATAFIYGNFSVPVVKNAALFWWNLHRSGEGDDDTLHAGCPVLVGDKWVANKWIHEYGQEFRRPCDTNPED.

The signal sequence occupies residues 1-24 (MGPGARLAALLVLLKLGVGDPAAA). Residues 227–260 (EDALDYLAFACYQVGNVSCALSLSREFLVYSPDN) form a TPR repeat. Asparagine 242 carries an N-linked (GlcNAc...) asparagine glycan. The Fe2OG dioxygenase domain maps to 422–529 (YAEYLQVVNY…KWVANKWIHE (108 aa)). 2 residues coordinate Fe cation: histidine 440 and aspartate 442. N-linked (GlcNAc...) asparagine glycosylation is present at asparagine 482. Residue histidine 510 participates in Fe cation binding. Position 520 (lysine 520) interacts with 2-oxoglutarate.

It belongs to the P4HA family. As to quaternary structure, heterotetramer of two alpha-3 chains and two beta chains (the beta chain is the multi-functional PDI). Requires Fe(2+) as cofactor. L-ascorbate serves as cofactor. N-glycosylation plays no role in the catalytic activity.

It is found in the endoplasmic reticulum lumen. The catalysed reaction is L-prolyl-[collagen] + 2-oxoglutarate + O2 = trans-4-hydroxy-L-prolyl-[collagen] + succinate + CO2. In terms of biological role, catalyzes the post-translational formation of 4-hydroxyproline in -Xaa-Pro-Gly- sequences in collagens and other proteins. In Rattus norvegicus (Rat), this protein is Prolyl 4-hydroxylase subunit alpha-3 (P4ha3).